A 661-amino-acid chain; its full sequence is Potassium voltage-gated channel subfamily KQT member 1 (661 aa).

Disordered regions lie at residues 1–29 (MAAA…ESAG) and 42–88 (ESGP…SLDP). At 1–119 (MAAASTPPRA…YNFLERPTGW (119 aa)) the chain is on the cytoplasmic side. Phosphoserine; by PKA is present on S27. The span at 54–85 (VSPPSAPEPAPPASPASPAPPAADQGPQPPVS) shows a compositional bias: pro residues. A helical membrane pass occupies residues 120 to 141 (KCFAYHFTVFLIVLVCLIFSVL). The Extracellular portion of the chain corresponds to 142 to 152 (STIEQYATLAT). Residues 153-175 (GTLFWMEIVLVVFFGTEYVVRLW) traverse the membrane as a helical segment. The Cytoplasmic segment spans residues 176–191 (SAGCRSKYVGLWGRLR). The helical transmembrane segment at 192-217 (FARKPISIIDLIVVVASMVVLCVGSK) threads the bilayer. Residues 218-225 (GQVFATSA) lie on the Extracellular side of the membrane. A helical; Voltage-sensor transmembrane segment spans residues 226 to 241 (IRGIRFLQILRMLHVD). The interaction with KCNE3 stretch occupies residues 237–245 (MLHVDRQGG). Topologically, residues 242-259 (RQGGTWRLLGSVVFIHRQ) are cytoplasmic. Position 243 (Q243) interacts with a 1,2-diacyl-sn-glycero-3-phospho-(1D-myo-inositol-4,5-bisphosphate). Residues 260 to 282 (ELITTLYIGFLGLIFSSYFVYLA) form a helical membrane-spanning segment. Topologically, residues 283–298 (EKDAVNESGRVEFGSY) are extracellular. N-linked (GlcNAc...) asparagine glycosylation is present at N288. The pore-forming intramembrane region spans 299–319 (ADALWWGVVTVTTIGYGDKVP). The Extracellular portion of the chain corresponds to 320–321 (QT). Residues 322–347 (WVGKTIASCFSVFAISFFALPAGILG) form a helical membrane-spanning segment. At 348–661 (SGFALKVQQK…VPRRDPEEGS (314 aa)) the chain is on the cytoplasmic side. Positions 369–381 (AAASLIQTAWRCY) are interaction with CALM. Phosphoserine occurs at positions 406 and 408. Residues 514 to 528 (KVIRRMQYFVAKKKF) are interaction with CALM; calcium-dependent. An interaction with KCNE1 C-terminus region spans residues 534 to 571 (PYDVRDVIEQYSQGHLNLMVRIKELQRRLDQSIGKPSL). Residues 584–620 (SNSIGARLNRVEDKVTQLDQRLVLIADMLQQLLALHQ) adopt a coiled-coil conformation. Residues 587-615 (IGARLNRVEDKVTQLDQRLVLIADMLQQL) are interaction with AKAP9. Residues 588–619 (GARLNRVEDKVTQLDQRLVLIADMLQQLLALH) form a C-terminal assembly domain (tetramerization) region. Positions 624–661 (HGGAHPAQARDGDPADPELFLPTYEQLTVPRRDPEEGS) are disordered.

It belongs to the potassium channel family. KQT (TC 1.A.1.15) subfamily. Kv7.1/KCNQ1 sub-subfamily. In terms of assembly, tetramer. Heterotetramer with KCNE1; targets to the membrane raft. Interacts (via C-terminus) with CALM; forms a heterooctameric structure (with 4:4 KCNQ1:CALM stoichiometry) in a calcium-independent manner. Interacts with AKAP9; targets protein kinase A (PKA) catalytic and regulatory subunits and protein phosphatase 1 (PP1) to the KCNQ1-KCNE1 complex, allowing PKA-mediated phosphorylation and increase of delayed rectifier potassium channel activity. Interacts with KCNE2; form a heterooligomer complex that targets to the membrane raft and leading to currents with an apparently instantaneous activation, a rapid deactivation process and a linear current-voltage relationship and decreases the amplitude of the outward current. Interacts with AP2M1; mediates estrogen-induced internalization via clathrin-coated vesicles. Interacts with NEDD4L; promotes internalization and decreases I(Ks) currents. Interacts with USP2; counteracts the NEDD4L-specific down-regulation of I(Ks) and restore plasma membrane localization. Heterotetramer with KCNQ5; has a voltage-gated potassium channel activity. Interacts with KCNE3; four KCNE3 molecules are bound to one KCNQ1 tetramer (4:4 KCNQ1:KCNE3 stoichiometry); alters membrane raft localization; affects KCNQ1 structure and gating properties. Interacts with KCNE4; impairs KCNQ1 localization in lipid rafts and inhibits voltage-gated potassium channel activity. Interacts with KCNE5; impairs KCNQ1 localization in lipid rafts and only conducts current upon strong and continued depolarization. Interacts with SLC5A3; forms coregulatory channel-transporter complexes that modulate Na(+)-coupled myo-inositol influx through the transporter. Post-translationally, phosphorylation at Ser-27 by PKA; increases delayed rectifier potassium channel activity of the KCNQ1-KCNE1 complex through a macromolecular complex that includes PKA, PP1, and the targeting protein AKAP9. Ubiquitinated by NEDD4L; promotes internalization. The ubiquitinylated form is internalized through a clathrin-mediated endocytosis by interacting with AP2M1 and is recycled back to the cell membrane via RAB4A and RAB11A. In terms of processing, deubiquitinated by USP2; counteracts the NEDD4L-specific down-regulation of I(Ks) and restores the membrane localization.

Its subcellular location is the cell membrane. The protein resides in the cytoplasmic vesicle membrane. It is found in the early endosome. It localises to the membrane raft. The protein localises to the endoplasmic reticulum. Its subcellular location is the basolateral cell membrane. The protein resides in the apical cell membrane. It catalyses the reaction K(+)(in) = K(+)(out). PIP2 molecule is essential to activate KCNQ channels by inducing the coupling of the voltage-sensing domain (VSD) and the pore-forming domain (PD). Upon channel activation, PIP2 disrupts the VSD-calmodulin/CALM interactions, causing the release of CALM from the VSD which triggers the opening of the gate. Calcium potentiates KCNQ1 channel current through calcium-bound CALM. Calcium-bound CALM competes with PIP2 to stabilize the channel open state. Pore-forming subunit of the voltage-gated potassium (Kv) channel involved in the regulation of cardiomyocyte excitability and important in normal development and functions of myocardium, inner ear, stomach and colon. Associates with KCNE beta subunits that modulates current kinetics. Induces a voltage-dependent by rapidly activating and slowly deactivating potassium-selective outward current. Also promotes a delayed voltage activated potassium current showing outward rectification characteristic. During beta-adrenergic receptor stimulation participates in cardiac repolarization by associating with KCNE1 to form the I(Ks) cardiac potassium current that increases the amplitude and slows down the activation kinetics of outward potassium current I(Ks). Muscarinic agonist oxotremorine-M strongly suppresses KCNQ1/KCNE1 current. When associated with KCNE3, forms the potassium channel that is important for cyclic AMP-stimulated intestinal secretion of chloride ions. This interaction with KCNE3 is reduced by 17beta-estradiol, resulting in the reduction of currents. During conditions of increased substrate load, maintains the driving force for proximal tubular and intestinal sodium ions absorption, gastric acid secretion, and cAMP-induced jejunal chloride ions secretion. Allows the provision of potassium ions to the luminal membrane of the secretory canaliculus in the resting state as well as during stimulated acid secretion. When associated with KCNE2, forms a heterooligomer complex leading to currents with an apparently instantaneous activation, a rapid deactivation process and a linear current-voltage relationship and decreases the amplitude of the outward current. When associated with KCNE4, inhibits voltage-gated potassium channel activity. When associated with KCNE5, this complex only conducts current upon strong and continued depolarization. Also forms a heterotetramer with KCNQ5 that has a voltage-gated potassium channel activity. Binds with phosphatidylinositol 4,5-bisphosphate. KCNQ1-KCNE2 channel associates with Na(+)-coupled myo-inositol symporter in the apical membrane of choroid plexus epithelium and regulates the myo-inositol gradient between blood and cerebrospinal fluid with an impact on neuron excitability. The chain is Potassium voltage-gated channel subfamily KQT member 1 from Oryctolagus cuniculus (Rabbit).